Here is a 412-residue protein sequence, read N- to C-terminus: N-carbamoyl-L-amino-acid amidohydrolase (412 aa).

A divalent metal cation is bound by residues H82, D93, E128, and H193. Q196, H229, N278, R291, and G360 together coordinate an N-carbamoyl-L-alpha-amino acid. The interval S212 to P330 is involved in dimerization. Residue H385 coordinates a divalent metal cation.

It belongs to the peptidase M20 family. As to quaternary structure, homodimer. The cofactor is Mn(2+). Ni(2+) is required as a cofactor. Co(2+) serves as cofactor. It depends on Fe(2+) as a cofactor.

The catalysed reaction is an N-carbamoyl-L-alpha-amino acid + H2O + 2 H(+) = an L-alpha-amino acid + NH4(+) + CO2. The enzyme catalyses N-carbamoyl-L-tryptophan + H2O + 2 H(+) = L-tryptophan + NH4(+) + CO2. It carries out the reaction N-carbamoyl-L-tyrosine + H2O + 2 H(+) = L-tyrosine + NH4(+) + CO2. It catalyses the reaction N-carbamoyl-L-phenylalanine + H2O + 2 H(+) = L-phenylalanine + NH4(+) + CO2. In terms of biological role, catalyzes the hydrolysis of aliphatic N-carbamoyl-L-alpha-amino acids to free L-alpha-amino acids. Is strictly L-specific since it is inactive toward N-carbamoyl-D-alpha-amino acids. Shows a preference for aromatic N-carbamoyl-L-alpha-amino acids, such as N-carbamoyl-L-tryptophan and N-carbamoyl-L-tyrosine and, to a lesser extent, N-carbamoyl-L-phenylalanine and the non-natural amino acid N-carbamoyl-L-thienylalanine. Carbamoyl derivatives of beta-alanine and charged aliphatic amino acids are not accepted as substrates. The chain is N-carbamoyl-L-amino-acid amidohydrolase from Paenarthrobacter aurescens (Arthrobacter aurescens).